A 72-amino-acid polypeptide reads, in one-letter code: Mitotic-spindle organizing protein 1 (72 aa).

The protein belongs to the MOZART1 family. Part of the gamma-tubulin complex.

It is found in the cytoplasm. Its subcellular location is the cytoskeleton. The protein localises to the microtubule organizing center. It localises to the centrosome. The protein resides in the spindle. Required for gamma-tubulin complex recruitment to the centrosome. The polypeptide is Mitotic-spindle organizing protein 1 (mzt1) (Xenopus laevis (African clawed frog)).